The primary structure comprises 152 residues: Deoxyuridine 5'-triphosphate nucleotidohydrolase (152 aa).

Substrate-binding positions include 71–73 (RSG), Asn-84, 88–90 (LID), and Met-98.

This sequence belongs to the dUTPase family. Mg(2+) is required as a cofactor.

It catalyses the reaction dUTP + H2O = dUMP + diphosphate + H(+). It participates in pyrimidine metabolism; dUMP biosynthesis; dUMP from dCTP (dUTP route): step 2/2. Its function is as follows. This enzyme is involved in nucleotide metabolism: it produces dUMP, the immediate precursor of thymidine nucleotides and it decreases the intracellular concentration of dUTP so that uracil cannot be incorporated into DNA. This Shewanella denitrificans (strain OS217 / ATCC BAA-1090 / DSM 15013) protein is Deoxyuridine 5'-triphosphate nucleotidohydrolase.